Consider the following 358-residue polypeptide: MDIRRKRFTIEGAKRIILEKKRLEEKKRIAEEKKRIALIEKQRIAEEKKRIAEEKKRFALEEKKRIAEEKKRIAEEKKRIVEEKKRLALIEKQRIAEEKIASGRKIRKRISTNATKHEREFVKVINSMFVGPATFVFVDIKGNKSREIHNVVRFRQLQGSKAKSPTAYVDREYNKPKADIAAVDITGKDVAWISHKASEGYQQYLKISGKNLKFTGKELEEVLSFKRKVVSMAPVSKIWPANKTVWSPIKSNLIKNQAIFGFDYGKKPGRDNVDIIGQGRPIITKRGSILYLTFTGFSALNGHLENFTGKHEPVFYVRTERSSSGRSITTVVNGVTYKNLRFFIHPYNFVSSKTQRIM.

Mg(2+) serves as cofactor.

It catalyses the reaction Endonucleolytic cleavage of DNA to give specific double-stranded fragments with terminal 5'-phosphates.. Functionally, a P subtype restriction enzyme that recognizes the double-stranded sequence 5'-RGCY-3' and cleaves after G-2. In the presence of ATP, there is a relaxation of its specificity and it can cleave 5'-RGCN-3' and 5'-YGCY-3', but not 5'-YGCR-3' (R.CviJI* activity). The sequence is that of Type II restriction enzyme CviJI from Paramecium bursaria Chlorella virus IL3A (PBCV-IL3A).